Here is a 326-residue protein sequence, read N- to C-terminus: Acetyl-coenzyme A carboxylase carboxyl transferase subunit alpha (326 aa).

Residues 46–300 (EIEARAAELR…KEALLRHLDE (255 aa)) enclose the CoA carboxyltransferase C-terminal domain.

The protein belongs to the AccA family. In terms of assembly, acetyl-CoA carboxylase is a heterohexamer composed of biotin carboxyl carrier protein (AccB), biotin carboxylase (AccC) and two subunits each of ACCase subunit alpha (AccA) and ACCase subunit beta (AccD).

Its subcellular location is the cytoplasm. The enzyme catalyses N(6)-carboxybiotinyl-L-lysyl-[protein] + acetyl-CoA = N(6)-biotinyl-L-lysyl-[protein] + malonyl-CoA. Its pathway is lipid metabolism; malonyl-CoA biosynthesis; malonyl-CoA from acetyl-CoA: step 1/1. Its function is as follows. Component of the acetyl coenzyme A carboxylase (ACC) complex. First, biotin carboxylase catalyzes the carboxylation of biotin on its carrier protein (BCCP) and then the CO(2) group is transferred by the carboxyltransferase to acetyl-CoA to form malonyl-CoA. This chain is Acetyl-coenzyme A carboxylase carboxyl transferase subunit alpha, found in Gloeobacter violaceus (strain ATCC 29082 / PCC 7421).